A 453-amino-acid chain; its full sequence is tRNA modification GTPase MnmE (453 aa).

The (6S)-5-formyl-5,6,7,8-tetrahydrofolate site is built by R22, E79, and K119. In terms of domain architecture, TrmE-type G spans 215–376 (GMKVVIAGRP…LKQHLKSLMG (162 aa)). N225 serves as a coordination point for K(+). Residues 225–230 (NAGKSS), 244–250 (TEIAGTT), 269–272 (DTAG), and 334–337 (NKAD) contribute to the GTP site. S229 serves as a coordination point for Mg(2+). T244, I246, and T249 together coordinate K(+). T250 contributes to the Mg(2+) binding site. K453 is a (6S)-5-formyl-5,6,7,8-tetrahydrofolate binding site.

This sequence belongs to the TRAFAC class TrmE-Era-EngA-EngB-Septin-like GTPase superfamily. TrmE GTPase family. As to quaternary structure, homodimer. Heterotetramer of two MnmE and two MnmG subunits. It depends on K(+) as a cofactor.

The protein localises to the cytoplasm. Functionally, exhibits a very high intrinsic GTPase hydrolysis rate. Involved in the addition of a carboxymethylaminomethyl (cmnm) group at the wobble position (U34) of certain tRNAs, forming tRNA-cmnm(5)s(2)U34. The protein is tRNA modification GTPase MnmE of Shewanella oneidensis (strain ATCC 700550 / JCM 31522 / CIP 106686 / LMG 19005 / NCIMB 14063 / MR-1).